A 398-amino-acid chain; its full sequence is NADH-quinone oxidoreductase subunit D (398 aa).

The protein belongs to the complex I 49 kDa subunit family. NDH-1 is composed of 14 different subunits. Subunits NuoB, C, D, E, F, and G constitute the peripheral sector of the complex.

The protein localises to the cell inner membrane. It catalyses the reaction a quinone + NADH + 5 H(+)(in) = a quinol + NAD(+) + 4 H(+)(out). In terms of biological role, NDH-1 shuttles electrons from NADH, via FMN and iron-sulfur (Fe-S) centers, to quinones in the respiratory chain. The immediate electron acceptor for the enzyme in this species is believed to be ubiquinone. Couples the redox reaction to proton translocation (for every two electrons transferred, four hydrogen ions are translocated across the cytoplasmic membrane), and thus conserves the redox energy in a proton gradient. The chain is NADH-quinone oxidoreductase subunit D from Bradyrhizobium sp. (strain ORS 278).